A 463-amino-acid chain; its full sequence is MKKISIKQLYREPEKFINKDIVVAGWIRTERTSKNFGFIELNDGSFFKNLQIIIDTNLDNFDKVSKLPISSSIVVEGKLVATPSAKQPFEVQASKVTVEGTSLQDYPLQKKRHSFEFLRSIAHLRPRSNTFSAVFRIRSLAAYAVHKFFQEKNFVYVHTPIITASDCEGAGEMFRVTTLDLNNIPKNDEGKIDFSQDFFDKDAKLTVSGQLSAESYALAFGNVYTFGPTFRAENSNTARHASEFWMIEPEMAFADLTDYMDVAEEMVKYIINYVLENAPEEMNFFNSFIDKDLFKRLDNVVNSEFKRITYTEAVDLLQKSGEKFQYPVEWGIDLQTEHERYITEKIFGKPVFVTDYPKDIKAFYMRLNEDNKTVAAADLLVPGVGEIIGGSQREERLDVLEERMKEFDLNEKDYWWYLELRKYGSAKHSGFGLGFERILMYMTGISNIRDVIPFPRTPGSAEF.

The protein belongs to the class-II aminoacyl-tRNA synthetase family. Homodimer.

The protein resides in the cytoplasm. It carries out the reaction tRNA(Asn) + L-asparagine + ATP = L-asparaginyl-tRNA(Asn) + AMP + diphosphate + H(+). In Clostridium tetani (strain Massachusetts / E88), this protein is Asparagine--tRNA ligase.